The sequence spans 148 residues: 3-dehydroquinate dehydratase (148 aa).

The Proton acceptor role is filled by tyrosine 24. Substrate is bound by residues asparagine 75, histidine 81, and aspartate 88. Histidine 101 (proton donor) is an active-site residue. Substrate contacts are provided by residues 102-103 and arginine 112; that span reads LS.

The protein belongs to the type-II 3-dehydroquinase family. Homododecamer.

The enzyme catalyses 3-dehydroquinate = 3-dehydroshikimate + H2O. It participates in metabolic intermediate biosynthesis; chorismate biosynthesis; chorismate from D-erythrose 4-phosphate and phosphoenolpyruvate: step 3/7. Its function is as follows. Catalyzes a trans-dehydration via an enolate intermediate. The protein is 3-dehydroquinate dehydratase of Bartonella henselae (strain ATCC 49882 / DSM 28221 / CCUG 30454 / Houston 1) (Rochalimaea henselae).